The sequence spans 177 residues: Large ribosomal subunit protein uL6 (177 aa).

A compositionally biased stretch (basic and acidic residues) spans 152–171 (RPPEPYKGKGVRYDDEEVRR). The tract at residues 152–177 (RPPEPYKGKGVRYDDEEVRRKEAKKK) is disordered.

It belongs to the universal ribosomal protein uL6 family. Part of the 50S ribosomal subunit.

This protein binds to the 23S rRNA, and is important in its secondary structure. It is located near the subunit interface in the base of the L7/L12 stalk, and near the tRNA binding site of the peptidyltransferase center. The chain is Large ribosomal subunit protein uL6 from Shewanella oneidensis (strain ATCC 700550 / JCM 31522 / CIP 106686 / LMG 19005 / NCIMB 14063 / MR-1).